A 542-amino-acid chain; its full sequence is Phenylalanine--tRNA ligase beta subunit (542 aa).

One can recognise a B5 domain in the interval 269 to 344 (LRRYTVSVSA…MTIGYDKLSP (76 aa)). The Mg(2+) site is built by D322, D328, E331, and E332.

Belongs to the phenylalanyl-tRNA synthetase beta subunit family. Type 2 subfamily. As to quaternary structure, tetramer of two alpha and two beta subunits. Mg(2+) is required as a cofactor.

The protein resides in the cytoplasm. It carries out the reaction tRNA(Phe) + L-phenylalanine + ATP = L-phenylalanyl-tRNA(Phe) + AMP + diphosphate + H(+). In Sulfolobus acidocaldarius (strain ATCC 33909 / DSM 639 / JCM 8929 / NBRC 15157 / NCIMB 11770), this protein is Phenylalanine--tRNA ligase beta subunit.